A 269-amino-acid chain; its full sequence is Ribosomal RNA small subunit methyltransferase J (269 aa).

S-adenosyl-L-methionine is bound by residues 124-125 and aspartate 188; that span reads ER.

It belongs to the methyltransferase superfamily. RsmJ family.

The protein localises to the cytoplasm. It carries out the reaction guanosine(1516) in 16S rRNA + S-adenosyl-L-methionine = N(2)-methylguanosine(1516) in 16S rRNA + S-adenosyl-L-homocysteine + H(+). In terms of biological role, specifically methylates the guanosine in position 1516 of 16S rRNA. This Saccharophagus degradans (strain 2-40 / ATCC 43961 / DSM 17024) protein is Ribosomal RNA small subunit methyltransferase J.